We begin with the raw amino-acid sequence, 410 residues long: Sorting nexin-4 (410 aa).

Residues 11–135 (FIIVSDPQKQ…TFLVSSDWDA (125 aa)) enclose the PX domain. 4 residues coordinate a 1,2-diacyl-sn-glycero-3-phospho-(1D-myo-inositol-3-phosphate): arginine 58, serine 60, lysine 84, and arginine 101. Positions 329–368 (NQEAARREKISKLESKVQALTTEVENAKKVADAFEKEALK) form a coiled coil.

Belongs to the sorting nexin family.

Its subcellular location is the cytoplasm. The protein localises to the cytosol. It localises to the preautophagosomal structure membrane. The protein resides in the endosome membrane. In terms of biological role, sorting nexin, involved in the separation or division of vacuoles throughout the entire life cycle of the cells. Involved in retrieval of late-Golgi SNAREs from post-Golgi endosomes to the trans-Golgi network, for cytoplasm to vacuole transport (Cvt), and autophagy of large cargos including mitophagy, pexophagy and glycophagy. The chain is Sorting nexin-4 (SNX4) from Eremothecium gossypii (strain ATCC 10895 / CBS 109.51 / FGSC 9923 / NRRL Y-1056) (Yeast).